Here is a 202-residue protein sequence, read N- to C-terminus: Dephospho-CoA kinase (202 aa).

A DPCK domain is found at 4-201 (VVALTGGIAS…QKYLAMSRQN (198 aa)). Position 12 to 17 (12 to 17 (ASGKTT)) interacts with ATP.

Belongs to the CoaE family.

The protein localises to the cytoplasm. It catalyses the reaction 3'-dephospho-CoA + ATP = ADP + CoA + H(+). The protein operates within cofactor biosynthesis; coenzyme A biosynthesis; CoA from (R)-pantothenate: step 5/5. Catalyzes the phosphorylation of the 3'-hydroxyl group of dephosphocoenzyme A to form coenzyme A. The protein is Dephospho-CoA kinase of Vibrio cholerae serotype O1 (strain ATCC 39315 / El Tor Inaba N16961).